The sequence spans 93 residues: MFKVNEYFDGTVKSIAFDMTAGPATIGVMAAGEYEFGTSQLEVMHVIAGALTVRLPGSDEWQNFASGSQFTVPANSKFQLKVAQDTAYLCEYR.

This sequence belongs to the nucleoside phosphorylase PpnP family.

The catalysed reaction is a purine D-ribonucleoside + phosphate = a purine nucleobase + alpha-D-ribose 1-phosphate. It catalyses the reaction adenosine + phosphate = alpha-D-ribose 1-phosphate + adenine. It carries out the reaction cytidine + phosphate = cytosine + alpha-D-ribose 1-phosphate. The enzyme catalyses guanosine + phosphate = alpha-D-ribose 1-phosphate + guanine. The catalysed reaction is inosine + phosphate = alpha-D-ribose 1-phosphate + hypoxanthine. It catalyses the reaction thymidine + phosphate = 2-deoxy-alpha-D-ribose 1-phosphate + thymine. It carries out the reaction uridine + phosphate = alpha-D-ribose 1-phosphate + uracil. The enzyme catalyses xanthosine + phosphate = alpha-D-ribose 1-phosphate + xanthine. Functionally, catalyzes the phosphorolysis of diverse nucleosides, yielding D-ribose 1-phosphate and the respective free bases. Can use uridine, adenosine, guanosine, cytidine, thymidine, inosine and xanthosine as substrates. Also catalyzes the reverse reactions. The polypeptide is Pyrimidine/purine nucleoside phosphorylase (Pseudomonas paraeruginosa (strain DSM 24068 / PA7) (Pseudomonas aeruginosa (strain PA7))).